Consider the following 217-residue polypeptide: Glycosylphosphatidylinositol anchor biosynthesis protein 11 (217 aa).

6 helical membrane-spanning segments follow: residues 45–61 (TWQT…YWFI), 74–94 (WLLV…ATVY), 111–131 (VTCI…GAPF), 138–158 (TWLL…SVLN), 169–189 (YFIS…LDWD), and 195–215 (WPIP…TFCS).

Belongs to the PIGF family.

The protein resides in the endoplasmic reticulum membrane. The protein operates within glycolipid biosynthesis; glycosylphosphatidylinositol-anchor biosynthesis. Functionally, acts in the GPI biosynthetic pathway between GlcNAc-PI synthesis and GPI transfer to protein. This Eremothecium gossypii (strain ATCC 10895 / CBS 109.51 / FGSC 9923 / NRRL Y-1056) (Yeast) protein is Glycosylphosphatidylinositol anchor biosynthesis protein 11 (GPI11).